Consider the following 148-residue polypeptide: HTH-type transcriptional regulator Rv2324 (148 aa).

In terms of domain architecture, HTH asnC-type spans leucine 4–asparagine 65. A DNA-binding region (H-T-H motif) is located at residues phenylalanine 23–aspartate 42.

Homodimer. Forms oligomers.

With respect to regulation, the DNA-binding activity of Rv2324 is modulated by interaction of Rv2324 with amino acids. Aspartate is the only effector amino acid that completely abolishes DNA binding. The majority of amino acids induce a dimer-tetramer or dimer-hexamer oligomeric transition. In response to amino-acid binding, adopts an open quaternary association, which is a part of the functional requirement to bind to non-symmetrically distributed target DNA binding sites. Transcriptional regulator involved in growth, DNA replication and damage control. Plays a crucial role in regulating survival and growth of M.tuberculosis. Could function as a global regulator in both the latent/persistent and active phases of growth. Binds to its own promoter region and to promoters of multiple metabolic genes, such as serB2, lat, ald and roc operon. In vitro, interacts with intrinsically curved and non-curved DNA molecules, and with both supercoiled and linear DNA, with higher affinity for supercoiled DNA. Binds to DNA recombination, replication and repair intermediates. This Mycobacterium tuberculosis (strain ATCC 25618 / H37Rv) protein is HTH-type transcriptional regulator Rv2324.